Reading from the N-terminus, the 498-residue chain is RuvB-like helicase 2 (498 aa).

Position 79–86 (79–86 (GPPSTGKT)) interacts with ATP. The disordered stretch occupies residues 458–498 (VTIGQESTDGSTQPQAKQQEVAQPEATQPQSQPEDDKMETD). Residues 461 to 489 (GQESTDGSTQPQAKQQEVAQPEATQPQSQ) are compositionally biased toward polar residues.

It belongs to the RuvB family. May form heterododecamers with RVB1. Component of the SWR1 chromatin remodeling complex, the INO80 chromatin remodeling complex, and of the R2TP complex.

The protein localises to the nucleus. The catalysed reaction is ATP + H2O = ADP + phosphate + H(+). In terms of biological role, DNA helicase which participates in several chromatin remodeling complexes, including the SWR1 and the INO80 complexes. The SWR1 complex mediates the ATP-dependent exchange of histone H2A for the H2A variant HZT1 leading to transcriptional regulation of selected genes by chromatin remodeling. The INO80 complex remodels chromatin by shifting nucleosomes and is involved in DNA repair. Also involved in pre-rRNA processing. The chain is RuvB-like helicase 2 (RVB2) from Candida albicans (strain SC5314 / ATCC MYA-2876) (Yeast).